The sequence spans 348 residues: MSIPETQKAIIFYESNGKLEHKDIPVPKPKPNELLINVKYSGVCHTDLHAWHGDWPLPTKLPLVGGHEGAGVVVGMGENVKGWKIGDYAGIKWLNGSCMACEYCELGNESNCPHADLSGYTHDGSFQEYATADAVQAAHIPQGTDLAEVAPILCAGITVYKALKSANLRAGHWAAISGAAGGLGSLAVQYAKAMGYRVLGIDGGPGKEELFTSLGGEVFIDFTKEKDIVSAVVKATNGGAHGIINVSVSEAAIEASTRYCRANGTVVLVGLPAGAKCSSDVFNHVVKSISIVGSYVGNRADTREALDFFARGLVKSPIKVVGLSSLPEIYEKMEKGQIAGRYVVDTSK.

Position 2 is an N-acetylserine (serine 2). Zn(2+) is bound at residue cysteine 44. Histidine 45, threonine 46, and histidine 49 together coordinate NAD(+). The Zn(2+) site is built by histidine 67, glutamate 68, cysteine 98, cysteine 101, cysteine 104, cysteine 112, and cysteine 154. Glycine 181, glycine 182, leucine 183, aspartate 202, and lysine 207 together coordinate NAD(+). A Phosphoserine modification is found at serine 213. Residue phenylalanine 222 coordinates NAD(+). Threonine 223 carries the phosphothreonine modification. Residues lysine 226 and lysine 234 each participate in a glycyl lysine isopeptide (Lys-Gly) (interchain with G-Cter in ubiquitin) cross-link. Residue valine 269 coordinates NAD(+). Phosphoserine is present on serine 279. A Glycyl lysine isopeptide (Lys-Gly) (interchain with G-Cter in ubiquitin) cross-link involves residue lysine 287. 2 residues coordinate NAD(+): serine 294 and valine 296. Serine 316 is modified (phosphoserine). Lysine 319 is covalently cross-linked (Glycyl lysine isopeptide (Lys-Gly) (interchain with G-Cter in ubiquitin)). Residue arginine 341 participates in NAD(+) binding.

It belongs to the zinc-containing alcohol dehydrogenase family. In terms of assembly, homotetramer. Zn(2+) is required as a cofactor.

The protein localises to the cytoplasm. The enzyme catalyses a primary alcohol + NAD(+) = an aldehyde + NADH + H(+). It catalyses the reaction a secondary alcohol + NAD(+) = a ketone + NADH + H(+). It carries out the reaction ethanol + NAD(+) = acetaldehyde + NADH + H(+). The catalysed reaction is butan-1-ol + NAD(+) = butanal + NADH + H(+). The enzyme catalyses hexan-1-ol + NAD(+) = hexanal + NADH + H(+). Preferentially oxidative, glucose-repressed isozyme that catalyzes the conversion of ethanol to acetaldehyde. Main enzyme involved in ethanol consumption. Acts on a variety of primary unbranched aliphatic alcohols. Also produces ethanol from glucose, albeit less than ADH1. This chain is Alcohol dehydrogenase 2 (ADH2), found in Saccharomyces cerevisiae (strain ATCC 204508 / S288c) (Baker's yeast).